Reading from the N-terminus, the 444-residue chain is Glutamyl-tRNA reductase (444 aa).

Substrate is bound by residues 49 to 52, Ser-109, 114 to 116, and Gln-120; these read TCNR and ETQ. The active-site Nucleophile is the Cys-50. 189–194 is a binding site for NADP(+); that stretch reads GAGKMG.

Belongs to the glutamyl-tRNA reductase family. Homodimer.

The catalysed reaction is (S)-4-amino-5-oxopentanoate + tRNA(Glu) + NADP(+) = L-glutamyl-tRNA(Glu) + NADPH + H(+). It functions in the pathway porphyrin-containing compound metabolism; protoporphyrin-IX biosynthesis; 5-aminolevulinate from L-glutamyl-tRNA(Glu): step 1/2. In terms of biological role, catalyzes the NADPH-dependent reduction of glutamyl-tRNA(Glu) to glutamate 1-semialdehyde (GSA). The polypeptide is Glutamyl-tRNA reductase (Bacillus cereus (strain ZK / E33L)).